Consider the following 123-residue polypeptide: Large ribosomal subunit protein bL12 (123 aa).

Belongs to the bacterial ribosomal protein bL12 family. Homodimer. Part of the ribosomal stalk of the 50S ribosomal subunit. Forms a multimeric L10(L12)X complex, where L10 forms an elongated spine to which 2 to 4 L12 dimers bind in a sequential fashion. Binds GTP-bound translation factors.

Forms part of the ribosomal stalk which helps the ribosome interact with GTP-bound translation factors. Is thus essential for accurate translation. The sequence is that of Large ribosomal subunit protein bL12 from Clostridium kluyveri (strain NBRC 12016).